We begin with the raw amino-acid sequence, 315 residues long: Protein rlx (315 aa).

The segment at 263–315 (TEQLKQRRVERAQETKQAHSKISSRDTRESENQRERAKGNNIRIERGDEGLSR) is disordered.

This protein is probably required for relaxation complex formation and plasmid mobilization by conjugative plasmids. The polypeptide is Protein rlx (rlx) (Staphylococcus aureus).